The primary structure comprises 424 residues: DNA repair protein Rad60 (424 aa).

A Phosphotyrosine modification is found at tyrosine 26. 2 positions are modified to phosphoserine: serine 32 and serine 34. A disordered region spans residues 45-177 (LPKKSTKTGK…LTTTTSNSAS (133 aa)). Over residues 48-57 (KSTKTGKRKN) the composition is skewed to basic residues. Over residues 77 to 93 (QAEHKAVEPEEDMRTER) the composition is skewed to basic and acidic residues. Serine 96 carries the phosphoserine modification. Residues 104–123 (EMEKKNGQQSDVEKHAKEND) are compositionally biased toward basic and acidic residues. Residues 156-166 (KPKKRGQKKRT) are compositionally biased toward basic residues. The segment covering 167–177 (SLTTTTSNSAS) has biased composition (low complexity).

In terms of assembly, forms a complex with dgrn; likely required for localization to the nuclear periphery. Interacts with the SMC5-SMC6 complex members SMC5 and SMC6/jnj following ionizing radiation (IR) to induce DNA damage. Interaction between the SMC5-SMC6 complex and the dgrn-Rad60 complex, may stabilize the association of heterochromatic DSBs with the nuclear periphery.

It is found in the nucleus. The protein localises to the nucleoplasm. Functionally, required for repair of DNA double strand breaks which occur during replication or are induced by ionizing radiation (IR). Functions with dgrn and downstream of the SMC5-SMC6 complex to regulate strand break repair. Likely functions by stabilizing the association of heterochromatic double strand breaks (DSBs) with the nuclear periphery as part of the homologous recombination (HR) repair process. The chain is DNA repair protein Rad60 from Drosophila melanogaster (Fruit fly).